The sequence spans 367 residues: Quinolinate synthase (367 aa).

Residues His45 and Ser62 each coordinate iminosuccinate. Cys109 contacts [4Fe-4S] cluster. Iminosuccinate is bound by residues 140 to 142 and Ser161; that span reads YVN. Cys229 is a binding site for [4Fe-4S] cluster. Residues 255–257 and Thr272 contribute to the iminosuccinate site; that span reads HPE. [4Fe-4S] cluster is bound at residue Cys319.

The protein belongs to the quinolinate synthase family. Type 3 subfamily. Requires [4Fe-4S] cluster as cofactor.

The protein resides in the cytoplasm. It catalyses the reaction iminosuccinate + dihydroxyacetone phosphate = quinolinate + phosphate + 2 H2O + H(+). It functions in the pathway cofactor biosynthesis; NAD(+) biosynthesis; quinolinate from iminoaspartate: step 1/1. In terms of biological role, catalyzes the condensation of iminoaspartate with dihydroxyacetone phosphate to form quinolinate. This Geobacillus sp. (strain WCH70) protein is Quinolinate synthase.